The following is a 912-amino-acid chain: MPSLPQDGVIQGSSPVDLGTELPYQCTMKRKVRKKKKKGIITANVAGTKFEIVRLVIDEMGFMKTPDEDETSNLIWCDAAVQQEKITDLQNYQRINHFPGMGEICRKDFLARNMTKMIKSRPMDYTFVPRTWIFPSEYTQFQNYVKELKKKRKQKTFIVKPANGAMGHGISLIRNGDKVPSQDHLIVQEYIEKPFLMEGYKFDLRIYILVTSCDPLKIFLYHDGLVRMGTEKYIPPNESNLTQLYMHLTNYSVNKHNERFERNETEDKGSKRSIKWFTEFLQANQHDVTKFWSDISELVVKTLIVAEPHVLHAYRMCRPGQPPGSESVCFEVLGFDILLDRKLKPWLLEINRAPSFGTDQKIDYDVKRGVLLNALKLLNIRTSDKRKNLAKQKAEAQRRLYGQNPVRRLSPGSSDWEQQRHQLERRKEELKERLLQVRKQVSQEEHENRHMGNYRRIYPPEDKALLEKYEGLLAVAFQTFLSGRAASFQREMNNPLKKMREEDLLDLLEQCEIDDEKLMGKTGRVRGPKPLCCMPECAEVTKKQKYYGSSDSSYDSSSSSSNSELDENEKELCQKRLDQVPYSLKHTSHCKIIQQPSGSHNLIYSESPVYLTTLVFLSEFPDSMRRSVSCPRSISAHLPSRGDVRPFSSQQVIPLARPTSASRSHSLNRASSYARHLPHGSDTGSTNTLNESLRQLKTKEQEDDLTSQTLFVLKDMRIRFPGKSDAESELLIEDIMDNWKHYKTKVASYWLIKLDSVKQRKVLDIVKSSIRTVLPRIWRVPDAEELSLYRIFNRVFNRLLWSHGQGLWSCFCDSGSSWESIFSKSPEVVTPLQLQCCQRLVELCKQCLLVVYKYTTETRGPISGIGPDWGNSRYLLPGSTQFLMRSPLYNMKYNSPGMTRSNVLFTSRYGRL.

The TTL domain occupies 38 to 390 (KGIITANVAG…RTSDKRKNLA (353 aa)). ATP-binding positions include lysine 160, 166–167 (MG), 188–191 (QEYI), and 201–203 (KFD). Position 227 (arginine 227) interacts with L-glutamate. An ATP-binding site is contributed by 249-250 (TN). L-glutamate-binding residues include tyrosine 251, serine 252, and lysine 271. Aspartate 336, glutamate 349, and asparagine 351 together coordinate Mg(2+). Residue lysine 367 coordinates L-glutamate. Positions 388-450 (NLAKQKAEAQ…VSQEEHENRH (63 aa)) are c-MTBD region. Disordered stretches follow at residues 547-570 (YGSS…ENEK) and 658-688 (PTSA…STNT). The span at 549-563 (SSDSSYDSSSSSSNS) shows a compositional bias: low complexity. The span at 659–671 (TSASRSHSLNRAS) shows a compositional bias: polar residues.

This sequence belongs to the tubulin--tyrosine ligase family. In terms of assembly, interacts with both alpha- and beta-tubulin (via C-terminal tubulin tails). The cofactor is Mg(2+). In terms of tissue distribution, highly expressed in brain, testis and trachea. Expressed in brain, heart, kidney, liver, lung, muscle and trachea. In the brain, highly expressed in hippocampus, thalamus, olfactory bulb and cerebellum cortex, corpus callosum and striatum.

The protein resides in the cell projection. It is found in the cilium. It localises to the cytoplasm. Its subcellular location is the cytoskeleton. The protein localises to the cilium basal body. The protein resides in the dendrite. It is found in the perikaryon. It carries out the reaction L-glutamyl-[protein] + L-glutamate + ATP = gamma-L-glutamyl-L-glutamyl-[protein] + ADP + phosphate + H(+). It catalyses the reaction (L-glutamyl)(n)-gamma-L-glutamyl-L-glutamyl-[protein] + L-glutamate + ATP = (L-glutamyl)(n+1)-gamma-L-glutamyl-L-glutamyl-[protein] + ADP + phosphate + H(+). In terms of biological role, polyglutamylase which modifies tubulin, generating polyglutamate side chains of variable lengths on the gamma-carboxyl group of specific glutamate residues within the C-terminal tail of tubulin. Mediates both ATP-dependent initiation and elongation steps of the polyglutamylation reaction. Preferentially modifies the beta-tubulin tail over an alpha-tail. Competes with monoglycylase TTLL3 for modification site on beta-tubulin substrate, thereby creating an anticorrelation between glycylation and glutamylation reactions. Required for neurite growth; responsible for the strong increase in tubulin polyglutamylation during postnatal neuronal maturation. The protein is Tubulin polyglutamylase TTLL7 of Mus musculus (Mouse).